A 607-amino-acid polypeptide reads, in one-letter code: Arginine--tRNA ligase (607 aa).

The short motif at P147–H157 is the 'HIGH' region element.

This sequence belongs to the class-I aminoacyl-tRNA synthetase family. As to quaternary structure, monomer.

It is found in the cytoplasm. It carries out the reaction tRNA(Arg) + L-arginine + ATP = L-arginyl-tRNA(Arg) + AMP + diphosphate. The chain is Arginine--tRNA ligase from Prochlorococcus marinus (strain NATL1A).